We begin with the raw amino-acid sequence, 315 residues long: tRNA pseudouridine synthase B (315 aa).

Aspartate 47 (nucleophile) is an active-site residue.

It belongs to the pseudouridine synthase TruB family. Type 1 subfamily.

The enzyme catalyses uridine(55) in tRNA = pseudouridine(55) in tRNA. Its function is as follows. Responsible for synthesis of pseudouridine from uracil-55 in the psi GC loop of transfer RNAs. The polypeptide is tRNA pseudouridine synthase B (Shewanella amazonensis (strain ATCC BAA-1098 / SB2B)).